The primary structure comprises 243 residues: MIIIPARLKSSRFENKVLECIFGLPMVVRCAKNASLVDECVVACDDESIMEVCQKFHIKAVMTSKHHNSGTERCLEAAQLLGLKNDERVLNLQGDEPFLEKEVIAMLLEATKNAPFMATCAKVIDKEKAKNPNLVKVVLDHQNNALYFSRSLIPFLRDFDLKRPTPLLGHIGIYGFHNREILEELCSLKPCVLEEIEKLEQLRALYYQKNILVKIVQSESVGIDTKEDLQNALKIFNSLPTTP.

The protein belongs to the KdsB family.

The protein localises to the cytoplasm. The enzyme catalyses 3-deoxy-alpha-D-manno-oct-2-ulosonate + CTP = CMP-3-deoxy-beta-D-manno-octulosonate + diphosphate. The protein operates within nucleotide-sugar biosynthesis; CMP-3-deoxy-D-manno-octulosonate biosynthesis; CMP-3-deoxy-D-manno-octulosonate from 3-deoxy-D-manno-octulosonate and CTP: step 1/1. It participates in bacterial outer membrane biogenesis; lipopolysaccharide biosynthesis. Activates KDO (a required 8-carbon sugar) for incorporation into bacterial lipopolysaccharide in Gram-negative bacteria. In Helicobacter acinonychis (strain Sheeba), this protein is 3-deoxy-manno-octulosonate cytidylyltransferase.